A 145-amino-acid chain; its full sequence is Hemoglobin fetal subunit beta (145 aa).

A Globin domain is found at 1-145; that stretch reads MLTAEEKASV…VANALAHRYH (145 aa). Heme b is bound by residues His62 and His91.

Belongs to the globin family. In terms of assembly, heterotetramer of two alpha chains and two beta chains.

The polypeptide is Hemoglobin fetal subunit beta (Ovis aries (Sheep)).